The sequence spans 363 residues: Galactokinase (363 aa).

16 to 19 (EHTD) contributes to the substrate binding site. Residues serine 50 and 103–109 (GSGLSSS) each bind ATP. Serine 109 and glutamate 141 together coordinate Mg(2+). Residue aspartate 153 is the Proton acceptor of the active site. Tyrosine 205 serves as a coordination point for substrate.

The protein belongs to the GHMP kinase family. GalK subfamily.

It is found in the cytoplasm. It catalyses the reaction alpha-D-galactose + ATP = alpha-D-galactose 1-phosphate + ADP + H(+). It participates in carbohydrate metabolism; galactose metabolism. Catalyzes the transfer of the gamma-phosphate of ATP to D-galactose to form alpha-D-galactose-1-phosphate (Gal-1-P). The protein is Galactokinase of Mycobacterium bovis (strain ATCC BAA-935 / AF2122/97).